We begin with the raw amino-acid sequence, 203 residues long: MDHSKQQNASITQAQAEEAVRTLLRWAGEDPTREGLLDTPRRVVEAYGDWFSGYREDPHDYLQRTFEEISGYDELIVLRNITYESHCEHHMAPIIGKVHIGYLPNGKVVGISKLARVVESYARRFQIQEKMTAQIAACIQETLTPRGVGVVIEGAHACMTTRGIHKRGVSMVTSKMLGTFREDARTRAEFLQFIEVGTNVMDL.

Positions 87, 90, and 158 each coordinate Zn(2+).

It belongs to the GTP cyclohydrolase I family. In terms of assembly, toroid-shaped homodecamer, composed of two pentamers of five dimers.

It carries out the reaction GTP + H2O = 7,8-dihydroneopterin 3'-triphosphate + formate + H(+). Its pathway is cofactor biosynthesis; 7,8-dihydroneopterin triphosphate biosynthesis; 7,8-dihydroneopterin triphosphate from GTP: step 1/1. This is GTP cyclohydrolase 1 from Xylella fastidiosa (strain 9a5c).